The chain runs to 246 residues: 4-hydroxy-tetrahydrodipicolinate reductase (246 aa).

Residues 8-13, 74-76, and 101-104 each bind NAD(+); these read GAKGRM, GTT, and APNF. His131 (proton donor/acceptor) is an active-site residue. His132 provides a ligand contact to (S)-2,3,4,5-tetrahydrodipicolinate. Lys135 serves as the catalytic Proton donor. 141 to 142 lines the (S)-2,3,4,5-tetrahydrodipicolinate pocket; it reads GT.

It belongs to the DapB family.

Its subcellular location is the cytoplasm. The enzyme catalyses (S)-2,3,4,5-tetrahydrodipicolinate + NAD(+) + H2O = (2S,4S)-4-hydroxy-2,3,4,5-tetrahydrodipicolinate + NADH + H(+). It catalyses the reaction (S)-2,3,4,5-tetrahydrodipicolinate + NADP(+) + H2O = (2S,4S)-4-hydroxy-2,3,4,5-tetrahydrodipicolinate + NADPH + H(+). It functions in the pathway amino-acid biosynthesis; L-lysine biosynthesis via DAP pathway; (S)-tetrahydrodipicolinate from L-aspartate: step 4/4. In terms of biological role, catalyzes the conversion of 4-hydroxy-tetrahydrodipicolinate (HTPA) to tetrahydrodipicolinate. The chain is 4-hydroxy-tetrahydrodipicolinate reductase from Cutibacterium acnes (strain DSM 16379 / KPA171202) (Propionibacterium acnes).